The chain runs to 175 residues: UPF0398 protein SPH_0478 (175 aa).

Belongs to the UPF0398 family.

This chain is UPF0398 protein SPH_0478, found in Streptococcus pneumoniae (strain Hungary19A-6).